Consider the following 574-residue polypeptide: Cytochrome P450 4g15 (574 aa).

A disordered region spans residues R288–Q327. Polar residues predominate over residues G295 to G304. Basic and acidic residues predominate over residues S305–A317. Heme is bound by residues E379 and C519.

Belongs to the cytochrome P450 family. Heme serves as cofactor. Expressed in larval brain cortex cells and ring glands and weakly in larval digestive system and adult nervous system.

It is found in the endoplasmic reticulum membrane. Its subcellular location is the microsome membrane. Its function is as follows. Probably involved in steroid hormones biosynthesis. The protein is Cytochrome P450 4g15 (Cyp4g15) of Drosophila melanogaster (Fruit fly).